We begin with the raw amino-acid sequence, 67 residues long: uncharacterized protein (67 aa).

The chain crosses the membrane as a helical span at residues 19 to 39 (ISFIIFFFFYFFFFYFFYGFW).

It is found in the membrane. This is an uncharacterized protein from Dictyostelium discoideum (Social amoeba).